A 417-amino-acid polypeptide reads, in one-letter code: Serine hydroxymethyltransferase (417 aa).

Residues Leu121 and Gly125–Leu127 contribute to the (6S)-5,6,7,8-tetrahydrofolate site. Position 229 is an N6-(pyridoxal phosphate)lysine (Lys229). Ser355 to Phe357 is a (6S)-5,6,7,8-tetrahydrofolate binding site.

It belongs to the SHMT family. As to quaternary structure, homodimer. It depends on pyridoxal 5'-phosphate as a cofactor.

It is found in the cytoplasm. It catalyses the reaction (6R)-5,10-methylene-5,6,7,8-tetrahydrofolate + glycine + H2O = (6S)-5,6,7,8-tetrahydrofolate + L-serine. It participates in one-carbon metabolism; tetrahydrofolate interconversion. It functions in the pathway amino-acid biosynthesis; glycine biosynthesis; glycine from L-serine: step 1/1. Its function is as follows. Catalyzes the reversible interconversion of serine and glycine with tetrahydrofolate (THF) serving as the one-carbon carrier. This reaction serves as the major source of one-carbon groups required for the biosynthesis of purines, thymidylate, methionine, and other important biomolecules. Also exhibits THF-independent aldolase activity toward beta-hydroxyamino acids, producing glycine and aldehydes, via a retro-aldol mechanism. The sequence is that of Serine hydroxymethyltransferase from Shewanella baltica (strain OS185).